Consider the following 422-residue polypeptide: MAKTIQAIRGMNDCLPTQSPLWQKVEGVVKNVISAYGYSEVRMPIVEMTHLFSRAIGEVTDVVEKEMYTFEDRNGDSLTLRPEGTAGCVRSGIENGLLYNQEQRLWYMGPMFRHERPQKGRYRQFHQCGVEVFGLDGPDVDAELIMMTARLWRELGIAQHVRLELNSIGSLEARANYRTALIDYLEQYQNVLDEDCKRRMYTNPLRVLDSKNPDVQAILGDAPQLSDYLDAESKQHFAGLCELLDAAGIEYTVNQRLVRGLDYYNRTVFEWITESLGSQGTVCGGGRYDGLVEQLGGKPTPAVGFAMGLERLVLMMETLGNTDVRRSVDVYMVTAGEGTMMAGMKLAEQLREQVPGLRVMTHFGGGNFKKQFKRADKVGAAIALVLGEDEVAAQTVVVKDLAGGEQNTVAQAEVAKLLAHLA.

The protein belongs to the class-II aminoacyl-tRNA synthetase family. As to quaternary structure, homodimer.

It is found in the cytoplasm. It catalyses the reaction tRNA(His) + L-histidine + ATP = L-histidyl-tRNA(His) + AMP + diphosphate + H(+). The polypeptide is Histidine--tRNA ligase (Vibrio cholerae serotype O1 (strain ATCC 39541 / Classical Ogawa 395 / O395)).